Reading from the N-terminus, the 720-residue chain is Mitogen-activated protein kinase 6 (720 aa).

M1 participates in a covalent cross-link: Peptide (Met-Gly) (interchain with G-Cter in ubiquitin). Residues 20 to 316 (YMDLKPLGCG…AEEALSHPYM (297 aa)) enclose the Protein kinase domain. ATP is bound by residues 26-34 (LGCGGNGLV) and K49. The Proton acceptor role is filled by D152. At S189 the chain carries Phosphoserine; by PAK1, PAK2 and PAK3. Residues 189–191 (SEG) carry the SEG motif motif. Positions 332 to 337 (FHIEDE) match the FRIEDE motif motif. Residues S386, S554, and S556 each carry the phosphoserine modification. The segment at 638–657 (SEMLETEPVEEGKRGERGRE) is disordered. The segment covering 647–657 (EEGKRGERGRE) has biased composition (basic and acidic residues). Residue S683 is modified to Phosphoserine. Polar residues predominate over residues 700-714 (AMKSSPQIPHKTYSS). Residues 700-720 (AMKSSPQIPHKTYSSILKHLN) form a disordered region.

The protein belongs to the protein kinase superfamily. CMGC Ser/Thr protein kinase family. MAP kinase subfamily. In terms of assembly, heterodimer with ERK4/MAPK4. Interacts with (via FRIEDE motif) MAPKAPK5. Interacts with UBE3A; this interaction may be indirect and mediated by HERC2, possibly via HERC2 interaction with NEURL4. Mg(2+) is required as a cofactor. Post-translationally, phosphorylated at Ser-189 by PAK1, PAK2 and PAK3 resulting in catalytic activation. Phosphorylated by MAPKAPK5 at other sites. In terms of processing, ubiquitination at Met-1 leads to degradation by the proteasome pathway.

It localises to the cytoplasm. It is found in the nucleus. It carries out the reaction L-seryl-[protein] + ATP = O-phospho-L-seryl-[protein] + ADP + H(+). The enzyme catalyses L-threonyl-[protein] + ATP = O-phospho-L-threonyl-[protein] + ADP + H(+). With respect to regulation, activated by phosphorylation at Ser-189. Atypical MAPK protein. Phosphorylates microtubule-associated protein 2 (MAP2) and MAPKAPK5. The precise role of the complex formed with MAPKAPK5 is still unclear, but the complex follows a complex set of phosphorylation events: upon interaction with atypical MAPKAPK5, ERK3/MAPK6 is phosphorylated at Ser-189 and then mediates phosphorylation and activation of MAPKAPK5, which in turn phosphorylates ERK3/MAPK6. May promote entry in the cell cycle. In Mus musculus (Mouse), this protein is Mitogen-activated protein kinase 6 (Mapk6).